Reading from the N-terminus, the 391-residue chain is Probable sugar efflux transporter (391 aa).

Transmembrane regions (helical) follow at residues 16 to 36 (VFVF…PVAL), 51 to 71 (VGLM…PLML), 82 to 102 (LLFL…AWNF), 103 to 123 (WVLL…WSIT), 138 to 158 (QALG…LPLG), 170 to 190 (TFGV…KLLP), 210 to 230 (PLLV…FTTY), 247 to 267 (ITTL…FLFG), 277 to 297 (FIAF…VFKN), 300 to 320 (WVIF…TIAL), 338 to 358 (IFSG…SIVI), and 361 to 381 (LGLE…LFWL).

The protein belongs to the major facilitator superfamily. SotB (TC 2.A.1.2) family.

It localises to the cell inner membrane. Its function is as follows. Involved in the efflux of sugars. The physiological role may be the reduction of the intracellular concentration of toxic sugars or sugar metabolites. This chain is Probable sugar efflux transporter, found in Helicobacter pylori (strain P12).